We begin with the raw amino-acid sequence, 271 residues long: Phosphate import ATP-binding protein PstB 1 (271 aa).

Residues 24-266 enclose the ABC transporter domain; sequence MIGKDVSVYY…PDDPRTQDYI (243 aa). 56–63 is a binding site for ATP; it reads GPSGCGKS.

It belongs to the ABC transporter superfamily. Phosphate importer (TC 3.A.1.7) family. The complex is composed of two ATP-binding proteins (PstB), two transmembrane proteins (PstC and PstA) and a solute-binding protein (PstS).

The protein resides in the cell inner membrane. The catalysed reaction is phosphate(out) + ATP + H2O = ADP + 2 phosphate(in) + H(+). In terms of biological role, part of the ABC transporter complex PstSACB involved in phosphate import. Responsible for energy coupling to the transport system. This Rhizobium johnstonii (strain DSM 114642 / LMG 32736 / 3841) (Rhizobium leguminosarum bv. viciae) protein is Phosphate import ATP-binding protein PstB 1.